Reading from the N-terminus, the 139-residue chain is Small ribosomal subunit protein uS12 (139 aa).

Positions 12–55 (RVDKVKKSDSPALNKGYNSFKKSQTDVSSPQKRGVCTRVGTMTP) are disordered. The span at 27-42 (GYNSFKKSQTDVSSPQ) shows a compositional bias: polar residues. Aspartate 102 bears the 3-methylthioaspartic acid mark. The tract at residues 119–139 (GVQNRMQGRSKYGTKKPKDKK) is disordered. Positions 130–139 (YGTKKPKDKK) are enriched in basic residues.

The protein belongs to the universal ribosomal protein uS12 family. In terms of assembly, part of the 30S ribosomal subunit. Contacts proteins S8 and S17. May interact with IF1 in the 30S initiation complex.

With S4 and S5 plays an important role in translational accuracy. Its function is as follows. Interacts with and stabilizes bases of the 16S rRNA that are involved in tRNA selection in the A site and with the mRNA backbone. Located at the interface of the 30S and 50S subunits, it traverses the body of the 30S subunit contacting proteins on the other side and probably holding the rRNA structure together. The combined cluster of proteins S8, S12 and S17 appears to hold together the shoulder and platform of the 30S subunit. The protein is Small ribosomal subunit protein uS12 of Shouchella clausii (strain KSM-K16) (Alkalihalobacillus clausii).